The sequence spans 1046 residues: Multidrug resistance protein MexB (1046 aa).

Topologically, residues 1–9 (MSKFFIDRP) are cytoplasmic. Residues 10-28 (IFAWVIALVIMLAGGLSIL) traverse the membrane as a helical segment. Residues 29–339 (SLPVNQYPAI…TPVVSASIHE (311 aa)) lie on the Periplasmic side of the membrane. The chain crosses the membrane as a helical span at residues 340–359 (VVKTLGEAILLVFLVMYLFL). Residues 360–365 (QNFRAT) are Cytoplasmic-facing. Residues 366 to 385 (LIPTIAVPVVLLGTFGVLAA) traverse the membrane as a helical segment. Residues 386-391 (FGFSIN) lie on the Periplasmic side of the membrane. Residues 392-413 (TLTMFGMVLAIGLLVDDAIVVV) traverse the membrane as a helical segment. Residues 414 to 441 (ENVERVMAEEGLSPREAARKSMGQIQGA) lie on the Cytoplasmic side of the membrane. A helical membrane pass occupies residues 442–460 (LVGIAMVLSAVFLPMAFFG). Topologically, residues 461–473 (GSTGVIYRQFSIT) are periplasmic. A helical transmembrane segment spans residues 474-496 (IVSAMALSVIVALILTPALCATM). The Cytoplasmic segment spans residues 497–538 (LKPIEKGDHGEHKGGFFGWFNRMFLSTTHGYERGVASILKHR). A helical membrane pass occupies residues 539-557 (APYLLIYVVIVAGMIWMFT). Topologically, residues 558-871 (RIPTAFLPDE…SYEERLSGSQ (314 aa)) are periplasmic. The helical transmembrane segment at 872–891 (APALYALSLLVVFLCLAALY) threads the bilayer. The Cytoplasmic segment spans residues 892–897 (ESWSIP). Residues 898–917 (FSVMLVVPLGVIGALLATSM) traverse the membrane as a helical segment. At 918–923 (RGLSND) the chain is on the periplasmic side. The chain crosses the membrane as a helical span at residues 924–945 (VFFQVGLLTTIGLSAKNAILIV). The Cytoplasmic segment spans residues 946–972 (EFAKELHEQGKGIVEAAIEACRMRLRP). Residues 973-991 (IVMTSLAFILGVVPLAIST) form a helical membrane-spanning segment. Residues 992–1004 (GAGSGSQHAIGTG) are Periplasmic-facing. A helical transmembrane segment spans residues 1005 to 1027 (VIGGMVTATVLAIFWVPLFYVAV). Residues 1028-1046 (STLFKDEASKQQASVEKGQ) lie on the Cytoplasmic side of the membrane.

It belongs to the resistance-nodulation-cell division (RND) (TC 2.A.6) family. As to quaternary structure, component of the MexAB-OprM multidrug efflux complex, composed of six MexA subunits forming a hexameric tube, binding to a MexB trimer, which interact with the trimeric OprM outer membrane channel protein. OprM is thought to not directly contact MexB; instead, MexA joins MexB and OprM by forming a funnel-like hexamer anchored to the inner membrane. MexA may initially form a hexameric ring complex with MexB prior to OprM, then OprM undergoes a conformational change as it contacts MexA, allowing the periplasmic gate to open. It is thought that, under high intracellular substrate concentration, MexB ejects substrate into the tunnel formed by MexA-OprM; as the substrate level declines, conformational changes in MexB cause efflux to reduce and stop and the complex shifts to the closed state. Acts as a substrate:proton antiporter and activity is enhanced significantly when in complex with MexA and OprM, in vitro.

It localises to the cell inner membrane. Export of antibiotics and solvents is dramatically decreased in the presence of the protonophore carbonyl cyanide m-chlorophenylhydrazone (CCCP), therefore may be driven by a proton gradient. Antibiotic efflux is inhibited by pyridopyrimidine derivatives, such as ABI-PP, acting by binding to a hydrophobic pocket in MexB. In terms of biological role, the inner membrane transporter component of the MexAB-OprM efflux system that confers multidrug resistance. Functions as the major efflux pump for n-hexane and p-xylene efflux. Has been shown in one study to be involved in the active efflux of the autoinducer N-(3-oxododecanoyl) homoserine lactone, thereby playing an indirect role in quorum-sensing; but has been shown in another study not to be involved in efflux of this autoinducer. Over-expression of the pump increases antibiotic and solvent efflux capacities. Implicated in the secretion of the siderophore pyoverdine. This is Multidrug resistance protein MexB (mexB) from Pseudomonas aeruginosa (strain ATCC 15692 / DSM 22644 / CIP 104116 / JCM 14847 / LMG 12228 / 1C / PRS 101 / PAO1).